The sequence spans 447 residues: MNAWEVNFDGLVGLTHHYAGLSFGNEASTRHRFQVSNPRQAAKQGLLKMKTLADAGFPQAVIPPHERPFIPVLRQLGFSGSDEQVLEKVARQAPHWLSSVSSASPMWVANAATIAPSADTLDGKVHFTVANLNNKFHRSLEALVTESLLKAIFNDEEKFSVHSALPQVALLGDEGAANHNRLGGHYGEPGMQLFVYGREEGNDTRPSRYPARQTREASEAVARLNQVNPQQVIFAQQNPDVIDQGVFHNDVIAVSNRQVLFCHQQAFARQSQLLANLRARVNGFMAIEVPATQVSVSDTVSTYLFNSQLLSRDDGSMMLVLPQECREHAGVWGYLNELLAADNPISELKVFDLRESMANGGGPACLRLRVVLTEEERRAVNPAVMMNDTLFNALNDWVDRYYRDRLTAADLADPQLLREGREALDVLSQLLNLGSVYPFQREGGGNG.

Residues 19-28 (AGLSFGNEAS), Asn-110, and 137-138 (HR) contribute to the substrate site. Glu-174 is an active-site residue. Arg-212 is a binding site for substrate. The active site involves His-248. Substrate is bound by residues Asp-250 and Asn-359. Catalysis depends on Cys-365, which acts as the Nucleophile.

The protein belongs to the succinylarginine dihydrolase family. Homodimer.

The catalysed reaction is N(2)-succinyl-L-arginine + 2 H2O + 2 H(+) = N(2)-succinyl-L-ornithine + 2 NH4(+) + CO2. It participates in amino-acid degradation; L-arginine degradation via AST pathway; L-glutamate and succinate from L-arginine: step 2/5. In terms of biological role, catalyzes the hydrolysis of N(2)-succinylarginine into N(2)-succinylornithine, ammonia and CO(2). This chain is N-succinylarginine dihydrolase, found in Escherichia coli O9:H4 (strain HS).